A 130-amino-acid polypeptide reads, in one-letter code: Small ribosomal subunit protein uS8 (130 aa).

Belongs to the universal ribosomal protein uS8 family. In terms of assembly, part of the 30S ribosomal subunit. Contacts proteins S5 and S12.

Its function is as follows. One of the primary rRNA binding proteins, it binds directly to 16S rRNA central domain where it helps coordinate assembly of the platform of the 30S subunit. The chain is Small ribosomal subunit protein uS8 from Pseudoalteromonas atlantica (strain T6c / ATCC BAA-1087).